The chain runs to 459 residues: Cyclooctat-9-en-7-ol 5-monooxygenase (459 aa).

The disordered stretch occupies residues 1–27 (MRERGPVTPAKSSAPPERPWTTGTAPG). Cys-408 provides a ligand contact to heme.

This sequence belongs to the cytochrome P450 family. Heme is required as a cofactor.

It carries out the reaction cyclooctat-9-en-7-ol + AH2 + O2 = cyclooctat-9-ene-5,7-diol + A + H2O. Involved in the biosynthesis of cyclooctatin, a potent inhibitor of lysophospholipase. Catalyzes the stereospecific hydroxylation of cyclooctat-9-en-7-ol to form cyclooctat-9-ene-5,7-diol. This Streptomyces melanosporofaciens protein is Cyclooctat-9-en-7-ol 5-monooxygenase.